The following is a 755-amino-acid chain: Kojibiose phosphorylase (755 aa).

333-334 (WD) lines the substrate pocket. Glutamate 473 functions as the Proton donor in the catalytic mechanism. 573-574 (KQ) is a substrate binding site.

This sequence belongs to the glycosyl hydrolase 65 family.

It carries out the reaction kojibiose + phosphate = beta-D-glucose 1-phosphate + D-glucose. Functionally, in vitro catalyzes the phosphorolysis of D-kojibiose into beta-D-glucose 1-phosphate and D-glucose. No other disaccharides tested substitute for D-kojibiose. In the reverse direction disaccharides can be formed from beta-D-glucose 1-phosphate plus D-glucose, L-sorbose, D-sorbitol, L-iditol or 1,5-anhydro-D-glucitol, but with low efficiency. The beta-D-glucose 1-phosphate product is the substrate for YcjU (AC P77366), the next apparent enzyme in the putative biochemical pathway encoded in this locus (yjcM to ycjW). The protein is Kojibiose phosphorylase (ycjT) of Escherichia coli (strain K12).